We begin with the raw amino-acid sequence, 448 residues long: Probable glycine dehydrogenase (decarboxylating) subunit 1 (448 aa).

The protein belongs to the GcvP family. N-terminal subunit subfamily. As to quaternary structure, the glycine cleavage system is composed of four proteins: P, T, L and H. In this organism, the P 'protein' is a heterodimer of two subunits.

It catalyses the reaction N(6)-[(R)-lipoyl]-L-lysyl-[glycine-cleavage complex H protein] + glycine + H(+) = N(6)-[(R)-S(8)-aminomethyldihydrolipoyl]-L-lysyl-[glycine-cleavage complex H protein] + CO2. The glycine cleavage system catalyzes the degradation of glycine. The P protein binds the alpha-amino group of glycine through its pyridoxal phosphate cofactor; CO(2) is released and the remaining methylamine moiety is then transferred to the lipoamide cofactor of the H protein. The chain is Probable glycine dehydrogenase (decarboxylating) subunit 1 from Lysinibacillus sphaericus (strain C3-41).